The primary structure comprises 485 residues: Zinc finger protein 577 (485 aa).

Positions 1–21 are disordered; that stretch reads MKNATIVMSVRREQGSSSGEG. Residues 23-94 enclose the KRAB domain; sequence LSFEDVAVGF…EGAAHSQICP (72 aa). The segment at 158 to 180 adopts a C2H2-type 1; degenerate zinc-finger fold; that stretch reads HECSVCGRAFSRKAQLIQHQRTE. C2H2-type zinc fingers lie at residues 186–208, 214–236, 242–264, 270–292, 298–320, 326–348, and 354–376; these read HGCGECGKTFMRKIQLTEHQRTH, HECSECGKAFSRKSQLMVHQRTH, YRCSKCGKAFSRKCRLNRHQRSH, YGCSVCGKAFSQKAYLTAHQRLH, YKCSDCGRTFYFKSDLTRHQRIH, YECSECEKAFRSKSKLIQHQRTH, and YSCRECGKAFAHMSVLIKHEKTH.

It belongs to the krueppel C2H2-type zinc-finger protein family.

The protein resides in the nucleus. Functionally, may be involved in transcriptional regulation. This Homo sapiens (Human) protein is Zinc finger protein 577 (ZNF577).